Consider the following 101-residue polypeptide: Small ribosomal subunit protein uS14 (101 aa).

This sequence belongs to the universal ribosomal protein uS14 family. Part of the 30S ribosomal subunit. Contacts proteins S3 and S10.

Binds 16S rRNA, required for the assembly of 30S particles and may also be responsible for determining the conformation of the 16S rRNA at the A site. This is Small ribosomal subunit protein uS14 from Shewanella woodyi (strain ATCC 51908 / MS32).